Reading from the N-terminus, the 66-residue chain is uncharacterized protein (66 aa).

A run of 2 helical transmembrane segments spans residues 3–23 and 34–54; these read LIHVLAALPFIGILLGIPFAN and FILAYIVMWALLTSALMAIVY.

It localises to the cell membrane. This is an uncharacterized protein from Bacillus subtilis (strain 168).